Consider the following 38-residue polypeptide: Large ribosomal subunit protein bL36 (38 aa).

This sequence belongs to the bacterial ribosomal protein bL36 family.

In Polynucleobacter necessarius subsp. necessarius (strain STIR1), this protein is Large ribosomal subunit protein bL36.